The primary structure comprises 582 residues: PCNA-interacting partner (582 aa).

Polar residues-rich tracts occupy residues 471–487 (GVNS…SSGN) and 501–510 (KSSSLTGNTS). A disordered region spans residues 471 to 514 (GVNSSVGRPTIGTSSGNVHLGRSEKEKVARKSSSLTGNTSSKRK).

The protein belongs to the PARI family. In terms of assembly, interacts with RAD51 and PCNA. Interacts with PARP1. Interacts with TASOR.

The protein resides in the cytoplasm. The protein localises to the nucleus. Functionally, required to suppress inappropriate homologous recombination, thereby playing a central role DNA repair and in the maintenance of genomic stability. Antagonizes homologous recombination by interfering with the formation of the RAD51-DNA homologous recombination structure. Binds single-strand DNA and poly(A) homopolymers. Positively regulate the poly(ADP-ribosyl)ation activity of PARP1; however such function may be indirect. This Bos taurus (Bovine) protein is PCNA-interacting partner (PARPBP).